Consider the following 185-residue polypeptide: Elongation factor P (185 aa).

Belongs to the elongation factor P family.

Its subcellular location is the cytoplasm. It participates in protein biosynthesis; polypeptide chain elongation. Functionally, involved in peptide bond synthesis. Stimulates efficient translation and peptide-bond synthesis on native or reconstituted 70S ribosomes in vitro. Probably functions indirectly by altering the affinity of the ribosome for aminoacyl-tRNA, thus increasing their reactivity as acceptors for peptidyl transferase. The sequence is that of Elongation factor P from Oceanobacillus iheyensis (strain DSM 14371 / CIP 107618 / JCM 11309 / KCTC 3954 / HTE831).